Here is a 380-residue protein sequence, read N- to C-terminus: Actin-like protein (380 aa).

It belongs to the actin family. ARP1 subfamily.

Its subcellular location is the cytoplasm. It is found in the cytoskeleton. Functionally, involved in nuclear migration. May function as a component of the dynactin complex which activates force generation by cytoplasmic dynein. The chain is Actin-like protein (ro-4) from Neurospora crassa (strain ATCC 24698 / 74-OR23-1A / CBS 708.71 / DSM 1257 / FGSC 987).